Here is a 66-residue protein sequence, read N- to C-terminus: Large ribosomal subunit protein bL32 (66 aa).

Residues 1-19 show a composition bias toward basic residues; sequence MAVPKRKMSRSNTRARRSQ. The interval 1–20 is disordered; sequence MAVPKRKMSRSNTRARRSQW.

Belongs to the bacterial ribosomal protein bL32 family.

This Beutenbergia cavernae (strain ATCC BAA-8 / DSM 12333 / CCUG 43141 / JCM 11478 / NBRC 16432 / NCIMB 13614 / HKI 0122) protein is Large ribosomal subunit protein bL32.